The chain runs to 262 residues: MALDEVKITRAIVESYLESFLKCTDVDVALVGAGPANLVAAKRLAEADVRVVLFEKRLSVGGGLWGGGMMFPRIVVQKEACRILDEYDIWYREFEEGYYVADSIEVVAKLTAGAIDAGAELINLVSVEDVMIREGDRIVGLVINWTAADMAGIHVDPLAIRARVVIDGTGHDAAVCRVVQKKIPGAIVGESGVIGEKPMWAALGEKIVVDATREVYPGLIVAGMAATTVAAGPRMGPIFGGMLLSGEKAASIALEKLAQSVD.

NAD(+) contacts are provided by residues Ala-36, 55–56 (EK), Gly-63, Val-127, and 154–156 (HVD). Fe cation contacts are provided by Asp-156 and His-171. Met-224 is a binding site for NAD(+). Arg-234 provides a ligand contact to glycine.

Belongs to the THI4 family. As to quaternary structure, homooctamer; tetramer of dimers. Requires Fe(2+) as cofactor.

The enzyme catalyses hydrogen sulfide + glycine + NAD(+) = ADP-5-ethyl-4-methylthiazole-2-carboxylate + nicotinamide + 3 H2O + H(+). It participates in cofactor biosynthesis; thiamine diphosphate biosynthesis. In terms of biological role, involved in the biosynthesis of the thiazole moiety of thiamine. Catalyzes the conversion of NAD and glycine to adenosine diphosphate 5-(2-hydroxyethyl)-4-methylthiazole-2-carboxylate (ADT), an adenylated thiazole intermediate, using free sulfide as a source of sulfur. The protein is Thiamine thiazole synthase of Methanothrix thermoacetophila (strain DSM 6194 / JCM 14653 / NBRC 101360 / PT) (Methanosaeta thermophila).